A 254-amino-acid polypeptide reads, in one-letter code: Polysaccharide deacetylase domain-containing protein ECU11_0510 (254 aa).

Residues 26 to 210 (GMIAINFVDG…IGKDKGYRFV (185 aa)) enclose the NodB homology domain.

The chain is Polysaccharide deacetylase domain-containing protein ECU11_0510 from Encephalitozoon cuniculi (strain GB-M1) (Microsporidian parasite).